We begin with the raw amino-acid sequence, 76 residues long: Zinc finger protein 706 (76 aa).

Low complexity predominate over residues 1–13 (MARGQQKIQSQQK). 2 disordered regions span residues 1–32 (MARGQQKIQSQQKNAKKQAGQKKKQGHDQKAA) and 53–76 (TFKQHFESKHPKTPLPPELADVQA). Residues 14-25 (NAKKQAGQKKKQ) show a composition bias toward basic residues. Residues 39 to 62 (YTCTVCRTQMPDPKTFKQHFESKH) form a C2H2-type zinc finger. The span at 53-62 (TFKQHFESKH) shows a compositional bias: basic and acidic residues.

It is found in the cytoplasm. Its subcellular location is the nucleus. Functionally, transcription repressor involved in the exit of embryonic stem cells (ESCs) from self-renewal. Acts by repressing expression of KLF4. The protein is Zinc finger protein 706 of Homo sapiens (Human).